The following is a 98-amino-acid chain: NADH-ubiquinone oxidoreductase chain 4L (98 aa).

The next 3 helical transmembrane spans lie at 1 to 21 (MPII…GMLI), 29 to 49 (SLLC…LMAL), and 58 to 78 (IVPV…LALL).

Belongs to the complex I subunit 4L family. As to quaternary structure, core subunit of respiratory chain NADH dehydrogenase (Complex I) which is composed of 45 different subunits.

Its subcellular location is the mitochondrion inner membrane. The catalysed reaction is a ubiquinone + NADH + 5 H(+)(in) = a ubiquinol + NAD(+) + 4 H(+)(out). In terms of biological role, core subunit of the mitochondrial membrane respiratory chain NADH dehydrogenase (Complex I) which catalyzes electron transfer from NADH through the respiratory chain, using ubiquinone as an electron acceptor. Part of the enzyme membrane arm which is embedded in the lipid bilayer and involved in proton translocation. In Semnopithecus entellus (Northern plains gray langur), this protein is NADH-ubiquinone oxidoreductase chain 4L (MT-ND4L).